The following is a 180-amino-acid chain: Probable cobalt-precorrin-6B C(15)-methyltransferase (decarboxylating) (180 aa).

Residues T16, 40–44 (GCGSG), D61, and A89 contribute to the S-adenosyl-L-methionine site.

The protein belongs to the methyltransferase superfamily. Archaeal-type CbiT family.

It carries out the reaction Co-precorrin-6B + S-adenosyl-L-methionine = Co-precorrin-7 + S-adenosyl-L-homocysteine + CO2. Its pathway is cofactor biosynthesis; adenosylcobalamin biosynthesis; cob(II)yrinate a,c-diamide from sirohydrochlorin (anaerobic route): step 8/10. In terms of biological role, catalyzes the methylation of C-15 in cobalt-precorrin-6B followed by the decarboxylation of C-12 to form cobalt-precorrin-7. The sequence is that of Probable cobalt-precorrin-6B C(15)-methyltransferase (decarboxylating) from Methanococcus vannielii (strain ATCC 35089 / DSM 1224 / JCM 13029 / OCM 148 / SB).